A 370-amino-acid chain; its full sequence is Glutamate 5-kinase (370 aa).

Lys-17 serves as a coordination point for ATP. Substrate is bound by residues Ser-57, Asp-144, and Asn-156. ATP is bound by residues 176–177 and 220–226; these read SD and TGGMVSK. One can recognise a PUA domain in the interval 282–360; it reads SGTLTLDDGA…SDLPAEMRRP (79 aa).

This sequence belongs to the glutamate 5-kinase family.

Its subcellular location is the cytoplasm. It carries out the reaction L-glutamate + ATP = L-glutamyl 5-phosphate + ADP. The protein operates within amino-acid biosynthesis; L-proline biosynthesis; L-glutamate 5-semialdehyde from L-glutamate: step 1/2. Functionally, catalyzes the transfer of a phosphate group to glutamate to form L-glutamate 5-phosphate. This Mycolicibacterium gilvum (strain PYR-GCK) (Mycobacterium gilvum (strain PYR-GCK)) protein is Glutamate 5-kinase.